The primary structure comprises 378 residues: Zinc finger protein DPF3 (378 aa).

Lys99 is covalently cross-linked (Glycyl lysine isopeptide (Lys-Gly) (interchain with G-Cter in SUMO2)). The disordered stretch occupies residues 145–193 (VLENDENVEEGNEEEDLEEDIPKRKNRTRGRARGSAGGRRRHDAASQED). Residues 148-163 (NDENVEEGNEEEDLEE) show a composition bias toward acidic residues. Residues 168–186 (RKNRTRGRARGSAGGRRRH) show a composition bias toward basic residues. A C2H2-type zinc finger spans residues 198–221 (YVCDICGKRYKNRPGLSYHYAHTH). The interval 225 to 254 (EEGDEAQDQETRSPPNHRNENHRPQKGPDG) is disordered. PHD-type zinc fingers lie at residues 259–319 (NNYC…CKSC) and 316–366 (CKSC…CWEL). The tract at residues 317–332 (KSCILCGTSENDDQLL) is interaction with HDGFL2. The residue at position 323 (Gly323) is a Phosphoserine.

This sequence belongs to the requiem/DPF family. As to quaternary structure, component of the BAF complex, which includes at least actin (ACTB), ARID1A, ARID1B/BAF250, SMARCA2, SMARCA4/BRG1/BAF190A, ACTL6A/BAF53, ACTL6B/BAF53B, SMARCE1/BAF57, SMARCC1/BAF155, SMARCC2/BAF170, SMARCB1/SNF5/INI1, and one or more of SMARCD1/BAF60A, SMARCD2/BAF60B, or SMARCD3/BAF60C. In muscle cells, the BAF complex also contains DPF3. Interacts with acetylated histones H3 and H4. Component of neuron-specific chromatin remodeling complex (nBAF complex) composed of at least, ARID1A/BAF250A or ARID1B/BAF250B, SMARCD1/BAF60A, SMARCD3/BAF60C, SMARCA2/BRM/BAF190B, SMARCA4/BRG1/BAF190A, SMARCB1/BAF47, SMARCC1/BAF155, SMARCE1/BAF57, SMARCC2/BAF170, DPF1/BAF45B, DPF3/BAF45C, ACTL6B/BAF53B and actin. In terms of assembly, interacts with HDGFL2, SMARCA4/BRG1/BAF190A, SMARCC1/BAF155 and SMARCD1/BAF60A. In terms of processing, phosphorylation at Ser-323 enhances its interaction with HDGFL2.

It is found in the nucleus. In terms of biological role, belongs to the neuron-specific chromatin remodeling complex (nBAF complex). During neural development a switch from a stem/progenitor to a post-mitotic chromatin remodeling mechanism occurs as neurons exit the cell cycle and become committed to their adult state. The transition from proliferating neural stem/progenitor cells to post-mitotic neurons requires a switch in subunit composition of the npBAF and nBAF complexes. As neural progenitors exit mitosis and differentiate into neurons, npBAF complexes which contain ACTL6A/BAF53A and PHF10/BAF45A, are exchanged for homologous alternative ACTL6B/BAF53B and DPF1/BAF45B or DPF3/BAF45C subunits in neuron-specific complexes (nBAF). The npBAF complex is essential for the self-renewal/proliferative capacity of the multipotent neural stem cells. The nBAF complex along with CREST plays a role regulating the activity of genes essential for dendrite growth. Muscle-specific component of the BAF complex, a multiprotein complex involved in transcriptional activation and repression of select genes by chromatin remodeling (alteration of DNA-nucleosome topology). Specifically binds acetylated lysines on histone 3 and 4 (H3K14ac, H3K9ac, H4K5ac, H4K8ac, H4K12ac, H4K16ac). In the complex, it acts as a tissue-specific anchor between histone acetylations and methylations and chromatin remodeling. It thereby probably plays an essential role in heart and skeletal muscle development. Acts as a regulator of myogenesis in cooperation with HDGFL2. Mediates the interaction of HDGFL2 with the BAF complex. HDGFL2-DPF3a activate myogenic genes by increasing chromatin accessibility through recruitment of SMARCA4/BRG1/BAF190A (ATPase subunit of the BAF complex) to myogenic gene promoters. This chain is Zinc finger protein DPF3 (DPF3), found in Homo sapiens (Human).